The chain runs to 747 residues: WD repeat-containing protein 91 (747 aa).

Residues 183 to 227 (QRTNQVQEENEVLRQKLFALQAEVHRLKKEEQQQEEAAALVQHKL) are a coiled coil. A Phosphoserine modification is found at Ser256. The segment covering 265–278 (LLPQSKKSPSRLSP) has biased composition (low complexity). The disordered stretch occupies residues 265-358 (LLPQSKKSPS…SQTQCAEKKL (94 aa)). Residues 283-299 (PQAQSSAKKDTFSSQAT) show a composition bias toward polar residues. Ser288 is subject to Phosphoserine. Residues 332–343 (RLQDHGKERREL) show a composition bias toward basic and acidic residues. Positions 344–353 (LSTSSSQTQC) are enriched in polar residues. WD repeat units lie at residues 406-445 (EHHS…QTKA), 448-488 (ISKS…NLCE), 511-555 (VCSA…QQLQ), 560-599 (PEPI…CAMS), 602-641 (AHCG…LKVS), 664-702 (VQVP…KVLE), and 709-747 (GHRA…AHKL).

The protein belongs to the WD repeat WDR91 family. Interacts with WDR81; involved in early to late endosome cargo transport. Interacts with BECN1; negatively regulates the PI3 kinase/PI3K activity associated with endosomal membranes.

It localises to the early endosome membrane. The protein resides in the late endosome membrane. In terms of biological role, functions as a negative regulator of the PI3 kinase/PI3K activity associated with endosomal membranes via BECN1, a core subunit of the PI3K complex. By modifying the phosphatidylinositol 3-phosphate/PtdInsP3 content of endosomal membranes may regulate endosome fusion, recycling, sorting and early to late endosome transport. It is for instance, required for the delivery of cargos like BST2/tetherin from early to late endosome and thereby participates indirectly to their degradation by the lysosome. May play a role in meiosis. The polypeptide is WD repeat-containing protein 91 (Rattus norvegicus (Rat)).